The sequence spans 253 residues: Acidic endochitinase Q (253 aa).

Residues 1 to 24 (MEFSGSPMALFCCVFFLFLTGSLA) form the signal peptide. E92 acts as the Proton donor in catalysis. C212 and C244 are disulfide-bonded.

It belongs to the glycosyl hydrolase 19 family. Chitinase class I subfamily.

It localises to the secreted. It carries out the reaction Random endo-hydrolysis of N-acetyl-beta-D-glucosaminide (1-&gt;4)-beta-linkages in chitin and chitodextrins.. In terms of biological role, defense against chitin-containing fungal pathogens. The chain is Acidic endochitinase Q from Nicotiana tabacum (Common tobacco).